The following is a 370-amino-acid chain: MEYAIEMRRELHKIPEPGFKEFKTQAFILDQIRSYPEDRVSYDTFETGVFVRVKGLTGNRTIGYRADIDGLPIEEATGLPFCSEHPGFMHACGHDVHASIALGLLRRIVELPVMDDVVFLFQPAEEGPGGAEPMIKSPLFEKYRPSEMYGLHVAPEYPVGTIASRPGVLFASAREVHITIYGQSGHAAFPHLTIDTVVAQAALIMQLQTIVSRSINPMNCSVITIGKVDAGIRENVIAGRALLDGTMRALNGTDMEKLEQRVRDIIRGIEASFGVKIDLQFGNRYYEVVNDQRVVDKFSSFVKMNANYIECDAAMTGEDFGFMLKEIPGMMFWLGVNNATSGLHQPTLNPDEEAIPFVINLLDHYFREYV.

The active site involves Asp-67. Glu-126 functions as the Proton acceptor in the catalytic mechanism.

The protein belongs to the peptidase M20A family. N-acetyldiaminopimelate deacetylase subfamily.

It carries out the reaction N-acetyl-(2S,6S)-2,6-diaminopimelate + H2O = (2S,6S)-2,6-diaminopimelate + acetate. It participates in amino-acid biosynthesis; L-lysine biosynthesis via DAP pathway; LL-2,6-diaminopimelate from (S)-tetrahydrodipicolinate (acetylase route): step 3/3. In terms of biological role, catalyzes the conversion of N-acetyl-diaminopimelate to diaminopimelate and acetate. This Exiguobacterium sibiricum (strain DSM 17290 / CCUG 55495 / CIP 109462 / JCM 13490 / 255-15) protein is N-acetyldiaminopimelate deacetylase.